The chain runs to 668 residues: Myb-like protein W (668 aa).

Disordered regions lie at residues 57–124, 246–357, 403–432, 497–546, 561–583, and 631–668; these read LDQF…NESV, EKEK…EEEV, KPKS…TDKG, YTNT…NKER, SMGR…TTTS, and QCEE…DEII. A compositionally biased stretch (low complexity) spans 69-121; it reads NNNNNNNSNNNNNNNNNNNNNNNNNNNNNNNNNNNNNNNNNNYNNYNNNNNNN. The segment covering 246–268 has biased composition (basic and acidic residues); it reads EKEKRKKEREEREEREKQEKQEQ. Low complexity predominate over residues 293–307; it reads NNKDNNHNGYYYYYD. Acidic residues predominate over residues 308–318; sequence NDNDNYNDGDD. Positions 319 to 335 are enriched in basic and acidic residues; that stretch reads EKEKEKEKEKEKEKENE. The Myb-like domain occupies 344-398; that stretch reads TSMVNSEEWTEEEVNKMNEIRGKLSTADYNYWDKVSAHVKSKTAEQCQRKYNSRF. Positions 501–542 are enriched in low complexity; the sequence is NNNNNNNNNNNNNNNNNNNNNNNNNNNNNNNNNNNNNNNNNN. Basic and acidic residues predominate over residues 632–641; sequence CEERKKKEDR. Over residues 642 to 651 the composition is skewed to acidic residues; that stretch reads DVDEDGEDDY.

The chain is Myb-like protein W (mybW) from Dictyostelium discoideum (Social amoeba).